A 665-amino-acid polypeptide reads, in one-letter code: Protein phosphatase 1 regulatory subunit 21 (665 aa).

Coiled coils occupy residues 1–84 (MTDL…SESK), 125–206 (LEAQ…RKYQ), 426–477 (ESRE…EAQV), and 586–627 (KRLA…EDQL).

As to quaternary structure, component of the FERRY complex.

Its subcellular location is the early endosome. Functionally, component of the FERRY complex (Five-subunit Endosomal Rab5 and RNA/ribosome intermediary). The FERRY complex directly interacts with mRNAs and RAB5A, and functions as a RAB5A effector involved in the localization and the distribution of specific mRNAs most likely by mediating their endosomal transport. The complex recruits mRNAs and ribosomes to early endosomes through direct mRNA-interaction. Putative regulator of protein phosphatase 1 (PP1) activity. May play a role in the endosomal sorting process or in endosome maturation pathway. The sequence is that of Protein phosphatase 1 regulatory subunit 21 (ppp1r21) from Danio rerio (Zebrafish).